Reading from the N-terminus, the 135-residue chain is Galectin-1 (135 aa).

Position 2 is an N-acetylalanine (A2). Residues 4–135 (GLVASNLNLK…DFKIKCVAFE (132 aa)) enclose the Galectin domain. N6-acetyllysine occurs at positions 13, 19, and 29. A Phosphoserine modification is found at S30. A beta-D-galactoside contacts are provided by residues 45-49 (HFNPR), H53, N62, and 69-72 (WGTE). Residue K108 is modified to N6-acetyllysine; alternate. K108 carries the N6-succinyllysine; alternate modification. N6-acetyllysine is present on K128.

Binds LGALS3BP. Interacts with CD2, CD3, CD4, CD6, CD7, CD43, ALCAM and CD45. Interacts with laminin. Interacts with SUSD2. Exists in a reversible and active monomer-homodimer equilibrium, the mononomer/dimer state is regulated by lectin concentration. Interacts with cargo receptor TMED10; the interaction mediates the translocation from the cytoplasm into the ERGIC (endoplasmic reticulum-Golgi intermediate compartment) and thereby secretion.

The protein localises to the cytoplasm. Its subcellular location is the secreted. The protein resides in the extracellular space. It localises to the extracellular matrix. Functionally, lectin that binds beta-galactoside and a wide array of complex carbohydrates. Plays a role in regulating apoptosis, cell proliferation and cell differentiation. Inhibits CD45 protein phosphatase activity and therefore the dephosphorylation of Lyn kinase. Strong inducer of T-cell apoptosis. This Cricetulus griseus (Chinese hamster) protein is Galectin-1 (LGALS1).